Consider the following 73-residue polypeptide: Translation initiation factor IF-1 (73 aa).

One can recognise an S1-like domain in the interval 1–73 (MPKKDGAIEI…TRGRIVYRYK (73 aa)).

Belongs to the IF-1 family. As to quaternary structure, component of the 30S ribosomal translation pre-initiation complex which assembles on the 30S ribosome in the order IF-2 and IF-3, IF-1 and N-formylmethionyl-tRNA(fMet); mRNA recruitment can occur at any time during PIC assembly.

Its subcellular location is the cytoplasm. Its function is as follows. One of the essential components for the initiation of protein synthesis. Stabilizes the binding of IF-2 and IF-3 on the 30S subunit to which N-formylmethionyl-tRNA(fMet) subsequently binds. Helps modulate mRNA selection, yielding the 30S pre-initiation complex (PIC). Upon addition of the 50S ribosomal subunit IF-1, IF-2 and IF-3 are released leaving the mature 70S translation initiation complex. This chain is Translation initiation factor IF-1, found in Salinispora arenicola (strain CNS-205).